Here is a 561-residue protein sequence, read N- to C-terminus: Urocanate hydratase (561 aa).

Residues 52-53, Gln-130, 176-178, Glu-196, Arg-201, 242-243, 263-267, 273-274, and Tyr-322 each bind NAD(+); these read GG, GMG, NA, QTSAH, and YL. Cys-410 is an active-site residue. Residue Gly-492 coordinates NAD(+).

This sequence belongs to the urocanase family. NAD(+) is required as a cofactor.

It localises to the cytoplasm. It catalyses the reaction 4-imidazolone-5-propanoate = trans-urocanate + H2O. Its pathway is amino-acid degradation; L-histidine degradation into L-glutamate; N-formimidoyl-L-glutamate from L-histidine: step 2/3. Its function is as follows. Catalyzes the conversion of urocanate to 4-imidazolone-5-propionate. This is Urocanate hydratase from Citrobacter koseri (strain ATCC BAA-895 / CDC 4225-83 / SGSC4696).